We begin with the raw amino-acid sequence, 312 residues long: Ribosomal RNA small subunit methyltransferase H (312 aa).

Residues 34 to 36, aspartate 54, phenylalanine 81, aspartate 102, and glutamine 109 contribute to the S-adenosyl-L-methionine site; that span reads AGH.

Belongs to the methyltransferase superfamily. RsmH family.

It localises to the cytoplasm. The enzyme catalyses cytidine(1402) in 16S rRNA + S-adenosyl-L-methionine = N(4)-methylcytidine(1402) in 16S rRNA + S-adenosyl-L-homocysteine + H(+). In terms of biological role, specifically methylates the N4 position of cytidine in position 1402 (C1402) of 16S rRNA. The polypeptide is Ribosomal RNA small subunit methyltransferase H (Citrifermentans bemidjiense (strain ATCC BAA-1014 / DSM 16622 / JCM 12645 / Bem) (Geobacter bemidjiensis)).